Reading from the N-terminus, the 138-residue chain is MFMQTKHIAQATVKVLQSYLTYQAVLRIQSELGETNPPQAIWLNQYLASHSIQNGETFLTELLDENKELVLRILAVREDIAESVLDFLPGMTRNSLAESNIAHRRHLLERLTRTVAEVDNFPSETSNGESNNNDSPPS.

The segment at valine 118–serine 138 is disordered. Over residues proline 122–serine 138 the composition is skewed to polar residues.

The protein belongs to the RbcX family. As to quaternary structure, homodimer. Interacts with the exposed C-terminal peptide of RbcL via its central cleft, contacts a second RbcL monomer via its peripheral polar surface.

The protein resides in the carboxysome. It localises to the cytoplasm. Its function is as follows. An RbcL-specific chaperone. The central cleft of the RbcX homodimer (RbcX2) binds the C-terminus of an RbcL monomer, stabilizing the C-terminus and probably preventing its reassociation with chaperonin GroEL-ES. At the same time the peripheral region of RbcX2 binds a second RbcL monomer, bridging the RbcL homodimers in the correct orientation. The RbcX2(2)-bound RbcL dimers then assemble into the RbcL8 core (RbcL8-(RbcX2)8). RbcS binding triggers the release of RbcX2. This Synechocystis sp. (strain ATCC 27184 / PCC 6803 / Kazusa) protein is RuBisCO chaperone RbcX.